A 192-amino-acid chain; its full sequence is Large ribosomal subunit protein uL18 (192 aa).

This sequence belongs to the universal ribosomal protein uL18 family. As to quaternary structure, part of the 50S ribosomal subunit. Contacts the 5S and 23S rRNAs.

In terms of biological role, this is one of the proteins that bind and probably mediate the attachment of the 5S RNA into the large ribosomal subunit, where it forms part of the central protuberance. The chain is Large ribosomal subunit protein uL18 from Methanothermobacter thermautotrophicus (strain ATCC 29096 / DSM 1053 / JCM 10044 / NBRC 100330 / Delta H) (Methanobacterium thermoautotrophicum).